Here is a 615-residue protein sequence, read N- to C-terminus: Putative binding protein BruAb2_0648 (615 aa).

The first 29 residues, 1 to 29, serve as a signal peptide directing secretion; it reads MLNRFIAFFRSVFLIGLVATAFGALPARA.

This sequence belongs to the bacterial solute-binding protein 5 family.

Its subcellular location is the periplasm. The sequence is that of Putative binding protein BruAb2_0648 from Brucella abortus biovar 1 (strain 9-941).